The primary structure comprises 139 residues: Large ribosomal subunit protein uL24 (139 aa).

Residues methionine 1–glutamate 25 are disordered.

It belongs to the universal ribosomal protein uL24 family.

This Dictyostelium discoideum (Social amoeba) protein is Large ribosomal subunit protein uL24 (rpl26).